The chain runs to 502 residues: Glycogen synthase 1 (502 aa).

Lys18 is an ADP-alpha-D-glucose binding site.

This sequence belongs to the glycosyltransferase 1 family. Bacterial/plant glycogen synthase subfamily.

It catalyses the reaction [(1-&gt;4)-alpha-D-glucosyl](n) + ADP-alpha-D-glucose = [(1-&gt;4)-alpha-D-glucosyl](n+1) + ADP + H(+). The protein operates within glycan biosynthesis; glycogen biosynthesis. Synthesizes alpha-1,4-glucan chains using ADP-glucose. The chain is Glycogen synthase 1 from Geobacter metallireducens (strain ATCC 53774 / DSM 7210 / GS-15).